A 981-amino-acid polypeptide reads, in one-letter code: Bifunctional glutamine synthetase adenylyltransferase/adenylyl-removing enzyme (981 aa).

The tract at residues 1–473 (MTMPLPSIEQ…RSVFNNLIGF (473 aa)) is adenylyl removase. Positions 479 to 981 (ADDSDNAWSD…HQIWQKLFFE (503 aa)) are adenylyl transferase.

This sequence belongs to the GlnE family. Mg(2+) is required as a cofactor.

It catalyses the reaction [glutamine synthetase]-O(4)-(5'-adenylyl)-L-tyrosine + phosphate = [glutamine synthetase]-L-tyrosine + ADP. The enzyme catalyses [glutamine synthetase]-L-tyrosine + ATP = [glutamine synthetase]-O(4)-(5'-adenylyl)-L-tyrosine + diphosphate. Involved in the regulation of glutamine synthetase GlnA, a key enzyme in the process to assimilate ammonia. When cellular nitrogen levels are high, the C-terminal adenylyl transferase (AT) inactivates GlnA by covalent transfer of an adenylyl group from ATP to specific tyrosine residue of GlnA, thus reducing its activity. Conversely, when nitrogen levels are low, the N-terminal adenylyl removase (AR) activates GlnA by removing the adenylyl group by phosphorolysis, increasing its activity. The regulatory region of GlnE binds the signal transduction protein PII (GlnB) which indicates the nitrogen status of the cell. This is Bifunctional glutamine synthetase adenylyltransferase/adenylyl-removing enzyme from Mannheimia succiniciproducens (strain KCTC 0769BP / MBEL55E).